The primary structure comprises 183 residues: Heavy metal-associated isoprenylated plant protein 44 (183 aa).

An HMA domain is found at 50-113 (LQTVELKVRM…AVRRAGKRAE (64 aa)). A metal cation is bound by residues cysteine 61 and cysteine 64. Cysteine 180 bears the Cysteine methyl ester mark. A lipid anchor (S-farnesyl cysteine) is attached at cysteine 180. The propeptide at 181-183 (RLM) is removed in mature form.

This sequence belongs to the HIPP family.

In terms of biological role, heavy-metal-binding protein. The protein is Heavy metal-associated isoprenylated plant protein 44 of Arabidopsis thaliana (Mouse-ear cress).